Reading from the N-terminus, the 389-residue chain is MSFQPTPEDKFTFGLWTVGWQGRDPFGDATRPALDPVETVQRLAELGAYGVTFHDDDLIPFGSSDTERESHIKRFRQALDATGMTVPMATTNLFTHPVFKDGGFTANDRDVRRYALRKTIRNIDLAAELGAKTYVAWGGREGAESGGAKDVRDALDRMKEAFDLLGEYVTAQGYDLRFAIEPKPNEPRGDILLPTVGHALAFIERLERPELYGVNPEVGHEQMAGLNFPHGIAQALWAGKLFHIDLNGQSGIKYDQDLRFGAGDLRAAFWLVDLLESAGYEGPRHFDFKPPRTEDFDGVWASAEGCMRNYLILKERAAAFRADPEVQEALRAARLDQLAQPTAADGLEALLADRTAFEDFDVEAAAARAAWPFERLDQLAMDHLLGARG.

Residues histidine 54 and aspartate 57 contribute to the active site. Mg(2+) contacts are provided by glutamate 181, glutamate 217, histidine 220, aspartate 245, aspartate 255, aspartate 257, and aspartate 287.

This sequence belongs to the xylose isomerase family. In terms of assembly, homotetramer. The cofactor is Mg(2+).

The protein resides in the cytoplasm. It catalyses the reaction alpha-D-xylose = alpha-D-xylulofuranose. Its function is as follows. Involved in D-xylose catabolism. This is Xylose isomerase (xylA) from Streptomyces violaceusniger.